The chain runs to 213 residues: Small ribosomal subunit protein uS3 (213 aa).

Positions 38 to 106 (IRSYIKKLLY…EFSLEVTEVR (69 aa)) constitute a KH type-2 domain.

Belongs to the universal ribosomal protein uS3 family. Part of the 30S ribosomal subunit. Forms a tight complex with proteins S10 and S14.

In terms of biological role, binds the lower part of the 30S subunit head. Binds mRNA in the 70S ribosome, positioning it for translation. This is Small ribosomal subunit protein uS3 from Lawsonia intracellularis (strain PHE/MN1-00).